The sequence spans 194 residues: Naphthalene 1,2-dioxygenase system, small oxygenase component (194 aa).

Belongs to the bacterial ring-hydroxylating dioxygenase beta subunit family. In terms of assembly, the naphthalene dioxygenase (NDO) multicomponent enzyme system is composed of an electron transfer component and a dioxygenase component (iron sulfur protein (ISP)). The electron transfer component is composed of a ferredoxin reductase (NagAa) and a ferredoxin (NagAb), and the dioxygenase component is formed by a large alpha subunit (NagAc) and a small beta subunit (NagAd).

The protein operates within aromatic compound metabolism; naphthalene degradation. In terms of biological role, component of the naphthalene dioxygenase (NDO) multicomponent enzyme system which catalyzes the incorporation of both atoms of molecular oxygen into naphthalene to form cis-(1R,2S)-dihydroxy-1,2-dihydronaphthalene. Also able to use styrene as substrate. The beta subunit seems to have a structural role in the holoenzyme. The protein is Naphthalene 1,2-dioxygenase system, small oxygenase component of Ralstonia sp.